A 468-amino-acid chain; its full sequence is 6-phospho-beta-galactosidase (468 aa).

D-galactose 6-phosphate is bound by residues Gln-19, His-116, Asn-159, Glu-160, and Asn-297. The active-site Proton donor is the Glu-160. Residue Glu-375 is the Nucleophile of the active site. Ser-428, Trp-429, Lys-435, and Tyr-437 together coordinate D-galactose 6-phosphate.

This sequence belongs to the glycosyl hydrolase 1 family.

It carries out the reaction a 6-phospho-beta-D-galactoside + H2O = D-galactose 6-phosphate + an alcohol. It participates in carbohydrate metabolism; lactose degradation; D-galactose 6-phosphate and beta-D-glucose from lactose 6-phosphate: step 1/1. This Streptococcus sanguinis (strain SK36) protein is 6-phospho-beta-galactosidase.